The sequence spans 467 residues: Trigger factor (467 aa).

In terms of domain architecture, PPIase FKBP-type spans 162–243 (GDFVSIDLSA…LNSVKERHLP (82 aa)). Positions 426 to 435 (EEGNELDLDE) are enriched in acidic residues. A disordered region spans residues 426-467 (EEGNELDLDELFGTQAGEEQGEQAEGTEATDEQSAKADAKAE). Over residues 436–452 (LFGTQAGEEQGEQAEGT) the composition is skewed to low complexity. The segment covering 458–467 (QSAKADAKAE) has biased composition (basic and acidic residues).

Belongs to the FKBP-type PPIase family. Tig subfamily.

The protein localises to the cytoplasm. It carries out the reaction [protein]-peptidylproline (omega=180) = [protein]-peptidylproline (omega=0). Its function is as follows. Involved in protein export. Acts as a chaperone by maintaining the newly synthesized protein in an open conformation. Functions as a peptidyl-prolyl cis-trans isomerase. In Saccharopolyspora erythraea (strain ATCC 11635 / DSM 40517 / JCM 4748 / NBRC 13426 / NCIMB 8594 / NRRL 2338), this protein is Trigger factor.